The sequence spans 620 residues: Phosphopentomutase (620 aa).

Alpha-D-glucose 1,6-bisphosphate contacts are provided by R71 and S173. S173 serves as the catalytic Phosphoserine intermediate. Residues S173, D330, D332, and D334 each contribute to the Mg(2+) site. S173 carries the post-translational modification Phosphoserine. Alpha-D-glucose 1,6-bisphosphate is bound by residues D334, R335, T408, E432, and K446.

Belongs to the phosphohexose mutase family. In terms of assembly, monomer. Mg(2+) is required as a cofactor. In terms of tissue distribution, highly expressed in lung, spleen and thymus. Expressed at lower levels in liver, brain, kidney, skeletal muscle, testis and heart.

It localises to the cytoplasm. The protein resides in the cytosol. It carries out the reaction alpha-D-ribose 1-phosphate = D-ribose 5-phosphate. The catalysed reaction is 2-deoxy-alpha-D-ribose 1-phosphate = 2-deoxy-D-ribose 5-phosphate. The enzyme catalyses alpha-D-glucose 1-phosphate = alpha-D-glucose 6-phosphate. It catalyses the reaction O-phospho-L-seryl-[protein] + alpha-D-glucose 1-phosphate = alpha-D-glucose 1,6-bisphosphate + L-seryl-[protein]. It carries out the reaction alpha-D-glucose 1,6-bisphosphate + L-seryl-[protein] = O-phospho-L-seryl-[protein] + alpha-D-glucose 6-phosphate. Its function is as follows. Catalyzes the conversion of the nucleoside breakdown products ribose-1-phosphate and deoxyribose-1-phosphate to the corresponding 5-phosphopentoses. Catalyzes the reversible isomerization of alpha-D-glucose 1-phosphate to alpha-D-glucose 6-phosphate but with a lower catalytic efficiency. The mechanism proceeds via the intermediate compound alpha-D-glucose 1,6-bisphosphate. In vitro, also has a low glucose 1,6-bisphosphate synthase activity which is most probably not physiologically relevant. This chain is Phosphopentomutase, found in Mus musculus (Mouse).